The chain runs to 211 residues: Large ribosomal subunit protein uL3 (211 aa).

It belongs to the universal ribosomal protein uL3 family. Part of the 50S ribosomal subunit. Forms a cluster with proteins L14 and L19.

Functionally, one of the primary rRNA binding proteins, it binds directly near the 3'-end of the 23S rRNA, where it nucleates assembly of the 50S subunit. The protein is Large ribosomal subunit protein uL3 of Halothermothrix orenii (strain H 168 / OCM 544 / DSM 9562).